A 135-amino-acid polypeptide reads, in one-letter code: Basic phospholipase A2 10 (135 aa).

7 cysteine pairs are disulfide-bonded: Cys-28/Cys-87, Cys-42/Cys-134, Cys-44/Cys-60, Cys-59/Cys-115, Cys-66/Cys-108, Cys-76/Cys-101, and Cys-94/Cys-106. Tyr-43, Gly-45, and Gly-47 together coordinate Ca(2+). The active site involves His-63. Asp-64 lines the Ca(2+) pocket. Residue Asp-109 is part of the active site.

The protein belongs to the phospholipase A2 family. Group I subfamily. D49 sub-subfamily. Ca(2+) serves as cofactor. As to expression, expressed by the venom gland.

The protein resides in the secreted. It catalyses the reaction a 1,2-diacyl-sn-glycero-3-phosphocholine + H2O = a 1-acyl-sn-glycero-3-phosphocholine + a fatty acid + H(+). Snake venom phospholipase A2 (PLA2) that inhibits neuromuscular transmission by blocking acetylcholine release from the nerve termini. PLA2 catalyzes the calcium-dependent hydrolysis of the 2-acyl groups in 3-sn-phosphoglycerides. In Bungarus fasciatus (Banded krait), this protein is Basic phospholipase A2 10.